A 359-amino-acid chain; its full sequence is Zinc finger CCCH domain-containing protein 20 (359 aa).

3 consecutive C3H1-type zinc fingers follow at residues 75 to 107 (TCDH…HPGE), 119 to 145 (YSGT…HGVF), and 153 to 177 (RYRT…HSPD). 2 disordered regions span residues 207–226 (SISP…SDSS) and 334–359 (MGRI…DLVM).

The sequence is that of Zinc finger CCCH domain-containing protein 20 from Arabidopsis thaliana (Mouse-ear cress).